The sequence spans 100 residues: Sec-independent protein translocase protein TatA (100 aa).

The helical transmembrane segment at 1–21 (MGALRPWHIAVLVVVLILLFG) threads the bilayer. The segment covering 46–58 (LHDDDRDLAEKAD) has biased composition (basic and acidic residues). The interval 46–100 (LHDDDRDLAEKADAQAGYQPMPPQVQQGQHPQQSPYPAPPQQQPVVDPVQRTRDS) is disordered. Positions 69-78 (QVQQGQHPQQ) are enriched in low complexity.

The protein belongs to the TatA/E family. The Tat system comprises two distinct complexes: a TatABC complex, containing multiple copies of TatA, TatB and TatC subunits, and a separate TatA complex, containing only TatA subunits. Substrates initially bind to the TatABC complex, which probably triggers association of the separate TatA complex to form the active translocon.

It localises to the cell membrane. Part of the twin-arginine translocation (Tat) system that transports large folded proteins containing a characteristic twin-arginine motif in their signal peptide across membranes. TatA could form the protein-conducting channel of the Tat system. The chain is Sec-independent protein translocase protein TatA from Salinispora tropica (strain ATCC BAA-916 / DSM 44818 / JCM 13857 / NBRC 105044 / CNB-440).